The primary structure comprises 335 residues: Tryptophan--tRNA ligase (335 aa).

ATP-binding positions include 9-11 (QST) and 17-18 (GN). A 'HIGH' region motif is present at residues 10-18 (STNSLTLGN). Aspartate 137 contacts L-tryptophan. Residues 149-151 (GKD), isoleucine 189, and 198-202 (KMSKS) each bind ATP. The 'KMSKS' region signature appears at 198-202 (KMSKS).

Belongs to the class-I aminoacyl-tRNA synthetase family. Homodimer.

It is found in the cytoplasm. It catalyses the reaction tRNA(Trp) + L-tryptophan + ATP = L-tryptophyl-tRNA(Trp) + AMP + diphosphate + H(+). Functionally, catalyzes the attachment of tryptophan to tRNA(Trp). This is Tryptophan--tRNA ligase from Malacoplasma penetrans (strain HF-2) (Mycoplasma penetrans).